The following is a 369-amino-acid chain: Probable dual-specificity RNA methyltransferase RlmN (369 aa).

Glutamate 108 serves as the catalytic Proton acceptor. The 244-residue stretch at 114-357 (YPDRATVCIS…CTVRDTRGQE (244 aa)) folds into the Radical SAM core domain. Cysteine 121 and cysteine 362 form a disulfide bridge. 3 residues coordinate [4Fe-4S] cluster: cysteine 128, cysteine 132, and cysteine 135. S-adenosyl-L-methionine contacts are provided by residues 183–184 (GE), serine 217, 240–242 (SLH), and asparagine 319. Cysteine 362 serves as the catalytic S-methylcysteine intermediate.

Belongs to the radical SAM superfamily. RlmN family. Requires [4Fe-4S] cluster as cofactor.

It is found in the cytoplasm. It carries out the reaction adenosine(2503) in 23S rRNA + 2 reduced [2Fe-2S]-[ferredoxin] + 2 S-adenosyl-L-methionine = 2-methyladenosine(2503) in 23S rRNA + 5'-deoxyadenosine + L-methionine + 2 oxidized [2Fe-2S]-[ferredoxin] + S-adenosyl-L-homocysteine. The enzyme catalyses adenosine(37) in tRNA + 2 reduced [2Fe-2S]-[ferredoxin] + 2 S-adenosyl-L-methionine = 2-methyladenosine(37) in tRNA + 5'-deoxyadenosine + L-methionine + 2 oxidized [2Fe-2S]-[ferredoxin] + S-adenosyl-L-homocysteine. Functionally, specifically methylates position 2 of adenine 2503 in 23S rRNA and position 2 of adenine 37 in tRNAs. This chain is Probable dual-specificity RNA methyltransferase RlmN, found in Saccharopolyspora erythraea (strain ATCC 11635 / DSM 40517 / JCM 4748 / NBRC 13426 / NCIMB 8594 / NRRL 2338).